The sequence spans 102 residues: Small ribosomal subunit protein uS10 (102 aa).

It belongs to the universal ribosomal protein uS10 family. In terms of assembly, part of the 30S ribosomal subunit.

Involved in the binding of tRNA to the ribosomes. The chain is Small ribosomal subunit protein uS10 from Brevibacillus brevis (strain 47 / JCM 6285 / NBRC 100599).